We begin with the raw amino-acid sequence, 128 residues long: Cionin (128 aa).

A signal peptide spans 1–22 (MGSNIVIYFSIIVIVTLNVNGV). Positions 23 to 108 (PASDLFKSVS…NQGHMQRMDR (86 aa)) are excised as a propeptide. Sulfotyrosine is present on residues Y110 and Y111. F116 carries the post-translational modification Phenylalanine amide. The propeptide occupies 120-128 (AIEDVDYEY).

This sequence belongs to the gastrin/cholecystokinin family. As to expression, expressed in both the gut and the neural ganglion.

The protein localises to the secreted. The sequence is that of Cionin from Ciona intestinalis (Transparent sea squirt).